We begin with the raw amino-acid sequence, 115 residues long: Tyrosine-protein phosphatase 22 (115 aa).

The Tyrosine-protein phosphatase domain maps to 1–115; sequence WLMIVEQKCR…ETGGDAPMVV (115 aa). A substrate-binding site is contributed by aspartate 83.

The protein belongs to the protein-tyrosine phosphatase family.

It carries out the reaction O-phospho-L-tyrosyl-[protein] + H2O = L-tyrosyl-[protein] + phosphate. The sequence is that of Tyrosine-protein phosphatase 22 (STY-22) from Styela plicata (Wrinkled sea squirt).